A 189-amino-acid chain; its full sequence is Cytidylate kinase (189 aa).

Position 7–15 (7–15 (GPPGSGKTS)) interacts with ATP.

This sequence belongs to the cytidylate kinase family. Type 2 subfamily.

Its subcellular location is the cytoplasm. It carries out the reaction CMP + ATP = CDP + ADP. The enzyme catalyses dCMP + ATP = dCDP + ADP. The chain is Cytidylate kinase from Saccharolobus islandicus (strain Y.N.15.51 / Yellowstone #2) (Sulfolobus islandicus).